A 310-amino-acid chain; its full sequence is D-alanine--D-alanine ligase (310 aa).

The 202-residue stretch at 104 to 305 folds into the ATP-grasp domain; that stretch reads KRLFHSEGLP…MPQLAERILQ (202 aa). 135–190 contributes to the ATP binding site; it reads LGDFHGAAFVKPLDSGSSVGISRAVGKDELIRGVAKALSVSHRCMVERAIEGRELT. The Mg(2+) site is built by aspartate 259, glutamate 272, and asparagine 274.

It belongs to the D-alanine--D-alanine ligase family. Mg(2+) serves as cofactor. The cofactor is Mn(2+).

The protein resides in the cytoplasm. It carries out the reaction 2 D-alanine + ATP = D-alanyl-D-alanine + ADP + phosphate + H(+). It participates in cell wall biogenesis; peptidoglycan biosynthesis. Cell wall formation. The sequence is that of D-alanine--D-alanine ligase from Magnetococcus marinus (strain ATCC BAA-1437 / JCM 17883 / MC-1).